The primary structure comprises 286 residues: Bifunctional protein FolD (286 aa).

Residues 165 to 167 and Ser190 each bind NADP(+); that span reads GRS.

This sequence belongs to the tetrahydrofolate dehydrogenase/cyclohydrolase family. As to quaternary structure, homodimer.

It carries out the reaction (6R)-5,10-methylene-5,6,7,8-tetrahydrofolate + NADP(+) = (6R)-5,10-methenyltetrahydrofolate + NADPH. The catalysed reaction is (6R)-5,10-methenyltetrahydrofolate + H2O = (6R)-10-formyltetrahydrofolate + H(+). It participates in one-carbon metabolism; tetrahydrofolate interconversion. Its function is as follows. Catalyzes the oxidation of 5,10-methylenetetrahydrofolate to 5,10-methenyltetrahydrofolate and then the hydrolysis of 5,10-methenyltetrahydrofolate to 10-formyltetrahydrofolate. The protein is Bifunctional protein FolD of Burkholderia cenocepacia (strain ATCC BAA-245 / DSM 16553 / LMG 16656 / NCTC 13227 / J2315 / CF5610) (Burkholderia cepacia (strain J2315)).